The following is an 817-amino-acid chain: LPS-assembly protein LptD (817 aa).

A signal peptide spans 1-45 (MDRLPLPHALHVPTHRPFAAPLPPRRLLARLAALMLCGVPLAVLA).

This sequence belongs to the LptD family. Component of the lipopolysaccharide transport and assembly complex. Interacts with LptE and LptA.

The protein localises to the cell outer membrane. In terms of biological role, together with LptE, is involved in the assembly of lipopolysaccharide (LPS) at the surface of the outer membrane. This chain is LPS-assembly protein LptD, found in Acidovorax sp. (strain JS42).